Reading from the N-terminus, the 185-residue chain is Ribosome-recycling factor (185 aa).

It belongs to the RRF family.

It localises to the cytoplasm. Functionally, responsible for the release of ribosomes from messenger RNA at the termination of protein biosynthesis. May increase the efficiency of translation by recycling ribosomes from one round of translation to another. The chain is Ribosome-recycling factor from Mannheimia succiniciproducens (strain KCTC 0769BP / MBEL55E).